An 82-amino-acid polypeptide reads, in one-letter code: Small ribosomal subunit protein eS17 (82 aa).

The protein belongs to the eukaryotic ribosomal protein eS17 family.

The protein is Small ribosomal subunit protein eS17 of Sulfolobus acidocaldarius (strain ATCC 33909 / DSM 639 / JCM 8929 / NBRC 15157 / NCIMB 11770).